Here is a 429-residue protein sequence, read N- to C-terminus: Enolase (429 aa).

Gln-163 lines the (2R)-2-phosphoglycerate pocket. The active-site Proton donor is the Glu-205. Mg(2+) contacts are provided by Asp-242, Glu-286, and Asp-313. Lys-338, Arg-367, Ser-368, and Lys-389 together coordinate (2R)-2-phosphoglycerate. The active-site Proton acceptor is the Lys-338.

The protein belongs to the enolase family. The cofactor is Mg(2+).

Its subcellular location is the cytoplasm. It localises to the secreted. The protein localises to the cell surface. The catalysed reaction is (2R)-2-phosphoglycerate = phosphoenolpyruvate + H2O. The protein operates within carbohydrate degradation; glycolysis; pyruvate from D-glyceraldehyde 3-phosphate: step 4/5. Catalyzes the reversible conversion of 2-phosphoglycerate (2-PG) into phosphoenolpyruvate (PEP). It is essential for the degradation of carbohydrates via glycolysis. The chain is Enolase from Thermoanaerobacter sp. (strain X514).